A 147-amino-acid polypeptide reads, in one-letter code: Large ribosomal subunit protein bL9 (147 aa).

Belongs to the bacterial ribosomal protein bL9 family.

Binds to the 23S rRNA. In Sulfurovum sp. (strain NBC37-1), this protein is Large ribosomal subunit protein bL9.